We begin with the raw amino-acid sequence, 116 residues long: Ribosome-binding factor A (116 aa).

It belongs to the RbfA family. Monomer. Binds 30S ribosomal subunits, but not 50S ribosomal subunits or 70S ribosomes.

It is found in the cytoplasm. Its function is as follows. One of several proteins that assist in the late maturation steps of the functional core of the 30S ribosomal subunit. Associates with free 30S ribosomal subunits (but not with 30S subunits that are part of 70S ribosomes or polysomes). Required for efficient processing of 16S rRNA. May interact with the 5'-terminal helix region of 16S rRNA. The polypeptide is Ribosome-binding factor A (Clostridium botulinum (strain Alaska E43 / Type E3)).